The primary structure comprises 489 residues: UDP-glycosyltransferase 85A1 (489 aa).

UDP-alpha-D-glucose contacts are provided by residues Ser307, 364 to 366, 381 to 389, and 403 to 406; these read CPQ, HCGWNSILE, and FADQ.

It belongs to the UDP-glycosyltransferase family. In terms of tissue distribution, expressed in root tips, lateral root initials, root apex, shoots, leaf periphery, leaf primordia and flowers.

In terms of biological role, involved in the O-glucosylation of trans-zeatin and dihydrozeatin. Also active in vitro on cis-zeatin. Not active on N-glucosylated substrates. The polypeptide is UDP-glycosyltransferase 85A1 (UGT85A1) (Arabidopsis thaliana (Mouse-ear cress)).